A 403-amino-acid polypeptide reads, in one-letter code: Vitamin D(3) 25-hydroxylase (403 aa).

A heme-binding site is contributed by Cys-347.

Belongs to the cytochrome P450 family. The cofactor is heme.

It localises to the cytoplasm. It carries out the reaction 5beta-cholestane-3alpha,7alpha,12alpha-triol + 6 reduced [adrenodoxin] + 3 O2 + 5 H(+) = (25R)-3alpha,7alpha,12alpha-trihydroxy-5beta-cholestan-26-oate + 6 oxidized [adrenodoxin] + 4 H2O. Its activity is regulated as follows. Activated by partially methylated beta-cyclodextrin. Its function is as follows. Hydroxylates vitamin D(3) into 25-hydroxyvitamin D(3) and 1-alpha,25-dihydroxyvitamin D(3), its physiologically active forms. It first hydroxylates the C-25 position of vitamin D(3) to form 25-hydroxyvitamin D(3), then subsequently hydroxylates the C-1-alpha position to form 1-alpha,25-dihydroxyvitamin D(3). Also displays 25-hydroxylase activity on vitamin D(2) and 7-dehydrocholesterol. May play a role in the biosynthesis of steroid metabolic intermediates. The protein is Vitamin D(3) 25-hydroxylase of Pseudonocardia autotrophica (Amycolata autotrophica).